The chain runs to 265 residues: Mlc titration factor A (265 aa).

Residues His-111, His-148, His-152, and Glu-211 each contribute to the Zn(2+) site.

Belongs to the MtfA family. Interacts with Mlc. Zn(2+) is required as a cofactor.

It localises to the cytoplasm. Functionally, involved in the modulation of the activity of the glucose-phosphotransferase system (glucose-PTS). Interacts with the transcriptional repressor Mlc, preventing its interaction with DNA and leading to the modulation of expression of genes regulated by Mlc, including ptsG, which encodes the PTS system glucose-specific EIICB component. Its function is as follows. Shows zinc-dependent metallopeptidase activity. This Escherichia coli (strain ATCC 8739 / DSM 1576 / NBRC 3972 / NCIMB 8545 / WDCM 00012 / Crooks) protein is Mlc titration factor A.